A 1274-amino-acid polypeptide reads, in one-letter code: Myosin-binding protein C, cardiac-type (1274 aa).

Position 1 is an N-acetylmethionine (methionine 1). The region spanning 8 to 95 (PVSAFTKKPR…SKVKFDLKVT (88 aa)) is the Ig-like C2-type 1 domain. Serine 47 carries the post-translational modification Phosphoserine. Residues 95-104 (TEPAPPEKAE) show a composition bias toward basic and acidic residues. The interval 95-153 (TEPAPPEKAESAVAPTSMEAPETPKEVPALATQLEGNVSSPEGSVSVTQDGSVAGSQGA) is disordered. Threonine 117 carries the post-translational modification Phosphothreonine. Polar residues predominate over residues 128–149 (LEGNVSSPEGSVSVTQDGSVAG). The 103-residue stretch at 157–259 (PIGLFLMRPQ…KFDSCNFNLT (103 aa)) folds into the Ig-like C2-type 2 domain. The Zn(2+) site is built by glutamine 212, histidine 214, glutamate 227, and histidine 229. Serine 279 bears the Phosphoserine mark. Phosphothreonine; by PKA and PKC is present on threonine 287. Serine 288 bears the Phosphoserine mark. Serine 307 bears the Phosphoserine; by PKA mark. Phosphoserine is present on residues serine 312 and serine 427. Ig-like C2-type domains lie at 361 to 452 (KKST…VKEP) and 452 to 546 (PPVL…KKLE). A disulfide bond links cysteine 436 and cysteine 443. Phosphoserine is present on residues serine 459 and serine 550. At threonine 607 the chain carries Phosphothreonine. Residues 645–765 (PKIHLDCPGS…PVGEDQVNLT (121 aa)) form the Ig-like C2-type 5 domain. Fibronectin type-III domains lie at 774-870 (APAA…IGPP) and 872-967 (EPTH…VQEI). Positions 971 to 1059 (PRLQLPRHLR…ENMEDKATLV (89 aa)) constitute an Ig-like C2-type 6 domain. The Fibronectin type-III 3 domain maps to 1068 to 1163 (PPLDIRVVET…TKEPIFIPRP (96 aa)). The 89-residue stretch at 1181 to 1269 (PSFTQPLTNR…GEAQCECRLE (89 aa)) folds into the Ig-like C2-type 7 domain. Omega-N-methylarginine is present on arginine 1241.

It belongs to the immunoglobulin superfamily. MyBP family. Post-translationally, substrate for phosphorylation by PKA and PKC. Reversible phosphorylation appears to modulate contraction. Polyubiquitinated.

Its function is as follows. Thick filament-associated protein located in the crossbridge region of vertebrate striated muscle a bands. In vitro it binds MHC, F-actin and native thin filaments, and modifies the activity of actin-activated myosin ATPase. It may modulate muscle contraction or may play a more structural role. This Rattus norvegicus (Rat) protein is Myosin-binding protein C, cardiac-type (Mybpc3).